The chain runs to 235 residues: MNSLSYLNQSIGFPPPEQALTDPNGLLAIGGDLRPDRLAQAYYQGIFPWFNANDPILWWSPDPRAVFTPSHPFGSKSLIKFLKKSAWRFTINQAFLDVVAGCAGPRNTQDGTWISAEIQMAYYELHLQGHAHSIEVWDGEQLVGGLYGIPVGGIFCGESMFHRQTNASKAAFAILNQHLVKHDFQLIDAQVMNPHLVSLGAKALPRSEFLTILHQYRDRATSASMWNKQEVFIEF.

It belongs to the L/F-transferase family.

It is found in the cytoplasm. It carries out the reaction N-terminal L-lysyl-[protein] + L-leucyl-tRNA(Leu) = N-terminal L-leucyl-L-lysyl-[protein] + tRNA(Leu) + H(+). It catalyses the reaction N-terminal L-arginyl-[protein] + L-leucyl-tRNA(Leu) = N-terminal L-leucyl-L-arginyl-[protein] + tRNA(Leu) + H(+). The catalysed reaction is L-phenylalanyl-tRNA(Phe) + an N-terminal L-alpha-aminoacyl-[protein] = an N-terminal L-phenylalanyl-L-alpha-aminoacyl-[protein] + tRNA(Phe). Functionally, functions in the N-end rule pathway of protein degradation where it conjugates Leu, Phe and, less efficiently, Met from aminoacyl-tRNAs to the N-termini of proteins containing an N-terminal arginine or lysine. This Shewanella frigidimarina (strain NCIMB 400) protein is Leucyl/phenylalanyl-tRNA--protein transferase.